A 348-amino-acid chain; its full sequence is sn-glycerol-3-phosphate import ATP-binding protein UgpC 3 (348 aa).

Residues 4–234 enclose the ABC transporter domain; sequence INIIDVKKNY…PASLFVASFI (231 aa). 36 to 43 contributes to the ATP binding site; it reads GPSGCGKS.

The protein belongs to the ABC transporter superfamily. sn-glycerol-3-phosphate importer (TC 3.A.1.1.3) family. The complex is composed of two ATP-binding proteins (UgpC), two transmembrane proteins (UgpA and UgpE) and a solute-binding protein (UgpB).

The protein resides in the cell inner membrane. It catalyses the reaction sn-glycerol 3-phosphate(out) + ATP + H2O = sn-glycerol 3-phosphate(in) + ADP + phosphate + H(+). In terms of biological role, part of the ABC transporter complex UgpBAEC involved in sn-glycerol-3-phosphate (G3P) import. Responsible for energy coupling to the transport system. This chain is sn-glycerol-3-phosphate import ATP-binding protein UgpC 3, found in Rhizobium johnstonii (strain DSM 114642 / LMG 32736 / 3841) (Rhizobium leguminosarum bv. viciae).